A 411-amino-acid chain; its full sequence is GTPase Obg (411 aa).

In terms of domain architecture, Obg spans 1-157 (MQFIDEARFV…REIRLELRVL (157 aa)). The segment at 20-45 (AVSFHREKYRPRGGPDGGRGGDGGSV) is disordered. The segment covering 33-43 (GPDGGRGGDGG) has biased composition (gly residues). The OBG-type G domain maps to 158–330 (SDVGLVGLPN…LERSAEAAPR (173 aa)). GTP is bound by residues 164–171 (GLPNAGKS), 189–193 (FTTLT), 212–215 (DIPG), 276–279 (NKVD), and 311–313 (ARL). Mg(2+) contacts are provided by Ser171 and Thr191. In terms of domain architecture, OCT spans 335–411 (VFRPSWRGLR…RIGDVSFEFR (77 aa)).

This sequence belongs to the TRAFAC class OBG-HflX-like GTPase superfamily. OBG GTPase family. In terms of assembly, monomer. Mg(2+) serves as cofactor.

The protein localises to the cytoplasm. In terms of biological role, an essential GTPase which binds GTP, GDP and possibly (p)ppGpp with moderate affinity, with high nucleotide exchange rates and a fairly low GTP hydrolysis rate. Plays a role in control of the cell cycle, stress response, ribosome biogenesis and in those bacteria that undergo differentiation, in morphogenesis control. This chain is GTPase Obg, found in Rubrobacter xylanophilus (strain DSM 9941 / JCM 11954 / NBRC 16129 / PRD-1).